The sequence spans 505 residues: Flagellin (505 aa).

Belongs to the bacterial flagellin family.

The protein resides in the secreted. It is found in the bacterial flagellum. Flagellin is the subunit protein which polymerizes to form the filaments of bacterial flagella. The sequence is that of Flagellin (fliC) from Salmonella dublin.